The chain runs to 864 residues: Receptor like protein 24 (864 aa).

A signal peptide spans 1 to 29 (MKTVFKSLLLLHFLLLLLLCFVSPSSFFL). Topologically, residues 30–830 (LKVPVGGLVA…EEKGEVINWK (801 aa)) are extracellular. N-linked (GlcNAc...) asparagine glycosylation is found at Asn61, Asn73, Asn94, and Asn112. LRR repeat units follow at residues 100 to 125 (FHQLRYLALNRNNFTSASLPSEFCNL), 127 to 148 (KLKLLSLFSNGFIDLSHNDLMG), 156 to 182 (LGKLAVLDLSDNHFSGTLNPNNSLFEL), 183 to 205 (HSLRYLNLAFNNISSSLPSKFGN), 207 to 229 (NKLEVLSLSFNGFSGQCFPTISN), 230 to 253 (LTRITQLYLHNNELTGSFPLVQNL), 254 to 277 (TKLSFLGLSDNLFSGTIPSYLFTF), 279 to 303 (SLSTLDLRENDLSGSIEVPNSSTSS), 305 to 326 (LEIMYLGFNHLEGKILEPISKL), 327 to 350 (INLKRLDLSFLNTSYPIDLNLLSP), 351 to 376 (LKSLSYLDFSGNSLSPASLSSSSYIP), 378 to 398 (SMESIVLSLCGIREFPNILKH), 399 to 423 (LQNLIHIDITSNQIKGKIPEWLWTL), 425 to 448 (QLSFVDISNNSFNGFQGSAEVFVN), and 449 to 472 (LSVRILMLDANNFEGALPTLPLSI). Residues Asn176, Asn194, Asn229, and Asn252 are each glycosylated (N-linked (GlcNAc...) asparagine). A glycan (N-linked (GlcNAc...) asparagine) is linked at Asn298. Asn338 carries N-linked (GlcNAc...) asparagine glycosylation. Residues Asn433 and Asn448 are each glycosylated (N-linked (GlcNAc...) asparagine). An LRR 16; degenerate repeat occupies 473–492 (IGFSAIHNSFTGEIPLSICN). N-linked (GlcNAc...) asparagine glycosylation is found at Asn492 and Asn505. LRR repeat units follow at residues 493-514 (RTSLTMVDLSYNNFTGPIPQCL), 515-538 (SNFMFVNLRKNDLEGSIPDTFYTD), 539-562 (SSLKSLDVGYNRLTGKLPRSLLNC), 564-585 (SLRFLSVDNNRVKDTFPFWLKA), 586-610 (LPNLRVLTLRSNKFYGPISPPHQGP), 613-637 (FPELRIFEIADNMFTGSLPPSFFVN), 688-712 (LTSYAAIDFSGNRLQGQIPESIGLL), 713-735 (KALIALNLSNNAFTGHIPLSFAN), 736-760 (LMNLESLDMSGNQLSGTIPNGLGSL), and 762-785 (FLVYISVAHNKLKGEIPQGTQITG). A glycan (N-linked (GlcNAc...) asparagine) is linked at Asn561. N-linked (GlcNAc...) asparagine glycosylation is present at Asn719. The helical transmembrane segment at 831–851 (AVAIGYAPGLLFGLAIAHLIA) threads the bilayer. Topologically, residues 852-864 (SYKPEWLVKIIGF) are cytoplasmic.

This sequence belongs to the RLP family.

It is found in the cell membrane. The polypeptide is Receptor like protein 24 (Arabidopsis thaliana (Mouse-ear cress)).